We begin with the raw amino-acid sequence, 151 residues long: Large ribosomal subunit protein bL9 (151 aa).

It belongs to the bacterial ribosomal protein bL9 family.

Its function is as follows. Binds to the 23S rRNA. In Lactobacillus acidophilus (strain ATCC 700396 / NCK56 / N2 / NCFM), this protein is Large ribosomal subunit protein bL9.